A 94-amino-acid polypeptide reads, in one-letter code: (2R)-sulfolactate sulfo-lyase subunit alpha (94 aa).

Residues 16–90 enclose the AFP-like domain; sequence VVVVEGVEAG…GEHVHVHNVK (75 aa).

(2R)-sulfolactate sulfo-lyase is composed of a SuyA and a SuyB subunit.

Its subcellular location is the cytoplasm. The catalysed reaction is (2R)-3-sulfolactate = sulfite + pyruvate + H(+). In terms of biological role, together with SuyB, desulfonates sulfolactate to pyruvate and sulfite. In Chromohalobacter salexigens (strain ATCC BAA-138 / DSM 3043 / CIP 106854 / NCIMB 13768 / 1H11), this protein is (2R)-sulfolactate sulfo-lyase subunit alpha (suyA).